Reading from the N-terminus, the 468-residue chain is 3-isopropylmalate dehydratase large subunit (468 aa).

Positions 347, 407, and 410 each coordinate [4Fe-4S] cluster.

Belongs to the aconitase/IPM isomerase family. LeuC type 1 subfamily. Heterodimer of LeuC and LeuD. Requires [4Fe-4S] cluster as cofactor.

The enzyme catalyses (2R,3S)-3-isopropylmalate = (2S)-2-isopropylmalate. It participates in amino-acid biosynthesis; L-leucine biosynthesis; L-leucine from 3-methyl-2-oxobutanoate: step 2/4. In terms of biological role, catalyzes the isomerization between 2-isopropylmalate and 3-isopropylmalate, via the formation of 2-isopropylmaleate. The polypeptide is 3-isopropylmalate dehydratase large subunit (Synechocystis sp. (strain ATCC 27184 / PCC 6803 / Kazusa)).